The sequence spans 201 residues: UPF0637 protein LSEI_1198 (201 aa).

The protein belongs to the UPF0637 family.

The chain is UPF0637 protein LSEI_1198 from Lacticaseibacillus paracasei (strain ATCC 334 / BCRC 17002 / CCUG 31169 / CIP 107868 / KCTC 3260 / NRRL B-441) (Lactobacillus paracasei).